The following is a 101-amino-acid chain: Urease subunit beta (101 aa).

This sequence belongs to the urease beta subunit family. In terms of assembly, heterotrimer of UreA (gamma), UreB (beta) and UreC (alpha) subunits. Three heterotrimers associate to form the active enzyme.

The protein localises to the cytoplasm. It catalyses the reaction urea + 2 H2O + H(+) = hydrogencarbonate + 2 NH4(+). Its pathway is nitrogen metabolism; urea degradation; CO(2) and NH(3) from urea (urease route): step 1/1. This Cupriavidus necator (strain ATCC 17699 / DSM 428 / KCTC 22496 / NCIMB 10442 / H16 / Stanier 337) (Ralstonia eutropha) protein is Urease subunit beta.